We begin with the raw amino-acid sequence, 244 residues long: UPF0246 protein FMG_1068 (244 aa).

Belongs to the UPF0246 family.

In Finegoldia magna (strain ATCC 29328 / DSM 20472 / WAL 2508) (Peptostreptococcus magnus), this protein is UPF0246 protein FMG_1068.